The primary structure comprises 214 residues: MEIFLDTANIEEIKKGASLGIISGVTTNPSLIAREGRDLKEVVMEIVSLIDGPISAEVISLDYEGMVREAEELSKLHPNITIKIPMTWDGIRAVKTLSSMGIKTNVTLVFSANQALLAALAGATFVSPFVGRLDDTGHDGVYLIEEIKTIYENYNFKTKIIAASIRHPLHVTQVAKAGADIATVPFKVLTQMFAHPQTKEGIEKFLADWQAMKR.

The Schiff-base intermediate with substrate role is filled by Lys83.

It belongs to the transaldolase family. Type 3B subfamily.

The protein resides in the cytoplasm. The enzyme catalyses D-sedoheptulose 7-phosphate + D-glyceraldehyde 3-phosphate = D-erythrose 4-phosphate + beta-D-fructose 6-phosphate. It functions in the pathway carbohydrate degradation; pentose phosphate pathway; D-glyceraldehyde 3-phosphate and beta-D-fructose 6-phosphate from D-ribose 5-phosphate and D-xylulose 5-phosphate (non-oxidative stage): step 2/3. Transaldolase is important for the balance of metabolites in the pentose-phosphate pathway. The protein is Probable transaldolase of Carboxydothermus hydrogenoformans (strain ATCC BAA-161 / DSM 6008 / Z-2901).